A 443-amino-acid chain; its full sequence is uncharacterized protein (443 aa).

The next 4 membrane-spanning stretches (helical) occupy residues 15-35 (IYAG…DGLA), 38-58 (LGMA…GPGS), 59-79 (AWQG…LSWL), and 181-201 (VVTA…IPAL). The tract at residues 231 to 270 (NFGIGNIGNANLGNGNIGNANLGSGNAGFFNFGNGNDGNT) is 4 X 10 AA approximate repeats.

Belongs to the mycobacterial PPE family.

It localises to the cell membrane. This is an uncharacterized protein from Mycobacterium tuberculosis (strain ATCC 25618 / H37Rv).